Reading from the N-terminus, the 91-residue chain is Probable Fe(2+)-trafficking protein (91 aa).

It belongs to the Fe(2+)-trafficking protein family.

Functionally, could be a mediator in iron transactions between iron acquisition and iron-requiring processes, such as synthesis and/or repair of Fe-S clusters in biosynthetic enzymes. The protein is Probable Fe(2+)-trafficking protein of Xanthomonas axonopodis pv. citri (strain 306).